A 230-amino-acid chain; its full sequence is Acyl-protein thioesterase 1 (230 aa).

Residues Ser119, Asp174, and His208 each act as charge relay system in the active site. Lys224 is subject to N6-acetyllysine.

Belongs to the AB hydrolase superfamily. AB hydrolase 2 family. Homodimer. As to expression, platelets.

The protein localises to the cytoplasm. It is found in the cell membrane. It localises to the nucleus membrane. Its subcellular location is the endoplasmic reticulum. The catalysed reaction is S-hexadecanoyl-L-cysteinyl-[protein] + H2O = L-cysteinyl-[protein] + hexadecanoate + H(+). The enzyme catalyses 1-hexadecanoyl-sn-glycero-3-phosphocholine + H2O = sn-glycerol 3-phosphocholine + hexadecanoate + H(+). It catalyses the reaction a 1-(9Z-octadecenoyl)-2-acyl-sn-glycero-3-phosphocholine + H2O = a 2-acyl-sn-glycero-3-phosphocholine + (9Z)-octadecenoate + H(+). Inhibited by palmostatin-B, leading to impair depalmitoylating of Ras. Its function is as follows. Acts as an acyl-protein thioesterase. Hydrolyzes fatty acids from S-acylated cysteine residues in proteins such as trimeric G alpha proteins or HRAS. Acts as a palmitoyl thioesterase that catalyzes depalmitoylation of proteins, such as ADRB2, KCNMA1 and SQSTM1. Acts as a negative regulator of autophagy by mediating palmitoylation of SQSTM1, decreasing affinity between SQSTM1 and ATG8 proteins and recruitment of ubiquitinated cargo proteins to autophagosomes. Acts as a lysophospholipase and hydrolyzes lysophosphatidylcholine (lyso-PC). Also hydrolyzes lysophosphatidylethanolamine (lyso-PE), lysophosphatidylinositol (lyso-PI) and lysophosphatidylserine (lyso-PS). Has much higher thioesterase activity than lysophospholipase activity. Contributes to the production of lysophosphatidic acid (LPA) during blood coagulation by recognizing and cleaving plasma phospholipids to generate lysophospholipids which in turn act as substrates for ENPP2 to produce LPA. In Homo sapiens (Human), this protein is Acyl-protein thioesterase 1 (LYPLA1).